The following is a 543-amino-acid chain: Plant intracellular Ras-group-related LRR protein 5 (543 aa).

LRR repeat units lie at residues 239–262, 264–284, 285–307, 309–331, 332–354, 356–377, 378–400, 402–424, 426–448, and 449–470; these read LQDV…IGSL, YLTK…AFGE, LSNL…SFGN, TSLA…LGKL, ANLR…IGSC, SLVE…IGKL, EKLE…VGSL, RLRE…CFAT, LVKL…IGNL, and EMLE…SFRC. An LRR 11; degenerate repeat occupies 472 to 494; the sequence is SRLRVFHADETPLEFPPREVVKL. The GVYW; degenerate signature appears at 495–502; the sequence is GAQAVVKY.

Belongs to the SHOC2 family. Widely expressed.

Functionally, leucine-rich repeat protein that likely mediates protein interactions, possibly in the context of signal transduction. This is Plant intracellular Ras-group-related LRR protein 5 (IRL5) from Oryza sativa subsp. japonica (Rice).